Consider the following 453-residue polypeptide: Calcium-binding tyrosine phosphorylation-regulated protein (453 aa).

The 38-residue stretch at 12–49 (YGLKTLLEGVSRAILKTNPTNITQFAAVYFKELIVFRE) folds into the RIIa domain. Disordered regions lie at residues 86-165 (PIKP…PVSA), 246-278 (PVSE…QVTS), and 406-453 (IINP…PEQV). Over residues 143-154 (DKPTTPKTDYTP) the composition is skewed to low complexity.

In terms of assembly, interacts with FSCB. In terms of processing, phosphorylated on tyrosine residues during in vitro capacitation. Dephosphorylation affects its ability to bind calcium. As to expression, expressed in spermatozoa.

It is found in the cytoplasm. The protein localises to the cytoskeleton. Its subcellular location is the cell projection. The protein resides in the cilium. It localises to the flagellum. Functionally, may function as a regulator of both motility- and head-associated functions such as capacitation and the acrosome reaction. May bind calcium in vitro. This chain is Calcium-binding tyrosine phosphorylation-regulated protein (Cabyr), found in Mus musculus (Mouse).